Consider the following 347-residue polypeptide: GMP reductase (347 aa).

Residue Ala-108–Ala-131 coordinates NADP(+). Residues Gly-181 and Gly-183 each contribute to the K(+) site. Cys-186 serves as the catalytic Thioimidate intermediate. Ile-216–Val-239 is a binding site for NADP(+).

This sequence belongs to the IMPDH/GMPR family. GuaC type 1 subfamily. In terms of assembly, homotetramer.

The enzyme catalyses IMP + NH4(+) + NADP(+) = GMP + NADPH + 2 H(+). Catalyzes the irreversible NADPH-dependent deamination of GMP to IMP. It functions in the conversion of nucleobase, nucleoside and nucleotide derivatives of G to A nucleotides, and in maintaining the intracellular balance of A and G nucleotides. In Salmonella paratyphi B (strain ATCC BAA-1250 / SPB7), this protein is GMP reductase.